A 388-amino-acid chain; its full sequence is Protein-glutamate methylesterase/protein-glutamine glutaminase 4 (388 aa).

Residues K4–L121 enclose the Response regulatory domain. The residue at position 55 (D55) is a 4-aspartylphosphate. A disordered region spans residues S137–T196. A compositionally biased stretch (pro residues) spans P148 to A164. The region spanning P197 to G388 is the CheB-type methylesterase domain. Catalysis depends on residues S209, H236, and D332.

Belongs to the CheB family. Phosphorylated by CheA. Phosphorylation of the N-terminal regulatory domain activates the methylesterase activity.

The protein resides in the cytoplasm. It catalyses the reaction [protein]-L-glutamate 5-O-methyl ester + H2O = L-glutamyl-[protein] + methanol + H(+). The enzyme catalyses L-glutaminyl-[protein] + H2O = L-glutamyl-[protein] + NH4(+). Functionally, involved in chemotaxis. Part of a chemotaxis signal transduction system that modulates chemotaxis in response to various stimuli. Catalyzes the demethylation of specific methylglutamate residues introduced into the chemoreceptors (methyl-accepting chemotaxis proteins or MCP) by CheR. Also mediates the irreversible deamidation of specific glutamine residues to glutamic acid. This Hahella chejuensis (strain KCTC 2396) protein is Protein-glutamate methylesterase/protein-glutamine glutaminase 4.